The primary structure comprises 475 residues: Gelsolin-like protein 1 (475 aa).

Residues 1–131 (MGGTSLDPAL…GYRHVDDQFK (131 aa)) are actin binding, actin severing, Ca-sensitive. The tract at residues 1–239 (MGGTSLDPAL…VRKVSKGKDD (239 aa)) is necessary for barbed end capping activity. One copy of the Gelsolin-like 1 repeat lies at 27 to 105 (FVLEPVPEVD…IQNYESPLFL (79 aa)). The segment at 70–73 (DEIG) is actin-actin interfilament contact point. A required for synapse elimination during development region spans residues 106–147 (SYFPDGIRYVSGGYESGYRHVDDQFKNWKPHLFHCKGKRNVR). Residues 133–227 (WKPHLFHCKG…STFWSYFGGV (95 aa)) are required for phosphatidylinositol 4,5-bisphosphate binding and regulation. 3 Gelsolin-like repeats span residues 148–208 (CTEV…KVHI), 275–341 (RKEQ…STQF), and 375–447 (EIAN…PPTF). An F- and G-actin binding, Ca-independent region spans residues 240-475 (DDNYWKRLTE…VQNMRRLLFH (236 aa)). The segment at 248–348 (TEQITLWKVS…TQFTQWFRDW (101 aa)) is inhibitory for phosphatidylinositol 4,5-bisphosphate binding activity.

It belongs to the villin/gelsolin family. Monomer. Binds to actin monomers and filaments. Cleavage by caspase ced-3 activates its actin-severing function and is required for the elimination of presynaptic components during development.

It is found in the cytoplasm. The protein resides in the cytoskeleton. Functionally, calcium-regulated, actin-modulating protein that binds to the plus (or barbed) ends of actin monomers or filaments, preventing monomer exchange (end-blocking or capping). Binds actin but does not nucleate actin polymerization, albeit slows down elongation by blocking the barbed ends. By promoting actin depolymerization, required for the elimination of presynaptic components downstream of the egl-1, ced-4 and ced-3 apoptotic pathway during larval development. This is Gelsolin-like protein 1 from Caenorhabditis elegans.